A 403-amino-acid polypeptide reads, in one-letter code: 26S proteasome regulatory subunit 8 (403 aa).

186–193 (GPPGTGKT) contributes to the ATP binding site.

This sequence belongs to the AAA ATPase family.

The protein localises to the cytoplasm. The protein resides in the nucleus. Its function is as follows. The 26S proteasome is involved in the ATP-dependent degradation of ubiquitinated proteins. The regulatory (or ATPase) complex confers ATP dependency and substrate specificity to the 26S complex. This is 26S proteasome regulatory subunit 8 (psmC5) from Dictyostelium discoideum (Social amoeba).